Reading from the N-terminus, the 188-residue chain is Putative 3-methyladenine DNA glycosylase (188 aa).

Belongs to the DNA glycosylase MPG family.

This Ehrlichia ruminantium (strain Welgevonden) protein is Putative 3-methyladenine DNA glycosylase.